The sequence spans 559 residues: 5-epiaristolochene synthase (559 aa).

Mg(2+)-binding residues include aspartate 312, aspartate 316, aspartate 455, threonine 459, and glutamate 463. A DDXXD motif motif is present at residues 312 to 316; that stretch reads DDTYD.

The protein belongs to the terpene synthase family. In terms of assembly, monomer. The cofactor is Mg(2+). In terms of tissue distribution, expressed only in treated leaves an not detected in control leaves.

Its subcellular location is the cytoplasm. The catalysed reaction is (2E,6E)-farnesyl diphosphate = (+)-5-epi-aristolochene + diphosphate. It participates in secondary metabolite biosynthesis; terpenoid biosynthesis. Functionally, catalyzes the cyclization of trans,trans-farnesyl diphosphate (FPP) to the bicyclic intermediate 5-epi-aristolochene, initial step in the conversion of FPP to the sesquiterpenoid antifungal phytoalexin capsidiol. Produces germacrene A as an enzyme-bound intermediate that is not released by the enzyme, but is further cyclized to produce the bicyclic 5-epi-aristolochene. This Capsicum annuum (Capsicum pepper) protein is 5-epiaristolochene synthase (EAS).